Consider the following 114-residue polypeptide: Protein preY, mitochondrial (114 aa).

The transit peptide at 1 to 35 (MLSGARCRLASALRGTRAPPSAVARRCLHASGSRP) directs the protein to the mitochondrion. The tract at residues 14–49 (RGTRAPPSAVARRCLHASGSRPLADRGKKTEEPPRD) is disordered. Residues 36–49 (LADRGKKTEEPPRD) are compositionally biased toward basic and acidic residues. The TRM112 domain maps to 51 to 97 (DPALLEFLVCPLSKKPLRYEASTNELINEELGIAYPIIDGIPNMIPQ).

Belongs to the PREY family. Interacts (via TRM112 domain) with NDUFAF5; the interaction is direct and stabilizes NDUFAF5 protein. Interacts with COQ5; the interaction is direct, stabilizes COQ5 protein and associates PYURF with COQ enzyme complex.

Its subcellular location is the mitochondrion. Its function is as follows. In mitochondria, S-adenosylmethionine-dependent methyltransferase chaperone that supports both coenzyme Q biosynthesis, by stabilizing its components, such as COQ5, and NADH:ubiquinone oxidoreductase complex (complex I, MT-ND1) assembly, by stabilizing complex I assembly factors, such as NDUFAF5. The chain is Protein preY, mitochondrial from Homo sapiens (Human).